We begin with the raw amino-acid sequence, 433 residues long: ATP-dependent protease ATPase subunit HslU (433 aa).

Residues Val-18, 60–65, Asp-246, Glu-311, and Arg-383 each bind ATP; that span reads GVGKTE.

Belongs to the ClpX chaperone family. HslU subfamily. In terms of assembly, a double ring-shaped homohexamer of HslV is capped on each side by a ring-shaped HslU homohexamer. The assembly of the HslU/HslV complex is dependent on binding of ATP.

Its subcellular location is the cytoplasm. Functionally, ATPase subunit of a proteasome-like degradation complex; this subunit has chaperone activity. The binding of ATP and its subsequent hydrolysis by HslU are essential for unfolding of protein substrates subsequently hydrolyzed by HslV. HslU recognizes the N-terminal part of its protein substrates and unfolds these before they are guided to HslV for hydrolysis. The protein is ATP-dependent protease ATPase subunit HslU of Rhodopseudomonas palustris (strain BisA53).